A 166-amino-acid chain; its full sequence is Transcription antitermination protein NusB (166 aa).

This sequence belongs to the NusB family.

In terms of biological role, involved in transcription antitermination. Required for transcription of ribosomal RNA (rRNA) genes. Binds specifically to the boxA antiterminator sequence of the ribosomal RNA (rrn) operons. The polypeptide is Transcription antitermination protein NusB (Chromohalobacter salexigens (strain ATCC BAA-138 / DSM 3043 / CIP 106854 / NCIMB 13768 / 1H11)).